Consider the following 552-residue polypeptide: Dihydroxy-acid dehydratase (552 aa).

Asp78 serves as a coordination point for Mg(2+). Cys119 serves as a coordination point for [2Fe-2S] cluster. Mg(2+)-binding residues include Asp120 and Lys121. The residue at position 121 (Lys121) is an N6-carboxylysine. Cys191 is a [2Fe-2S] cluster binding site. Residue Glu442 participates in Mg(2+) binding. Ser468 functions as the Proton acceptor in the catalytic mechanism.

It belongs to the IlvD/Edd family. Homodimer. The cofactor is [2Fe-2S] cluster. Requires Mg(2+) as cofactor.

The enzyme catalyses (2R)-2,3-dihydroxy-3-methylbutanoate = 3-methyl-2-oxobutanoate + H2O. It catalyses the reaction (2R,3R)-2,3-dihydroxy-3-methylpentanoate = (S)-3-methyl-2-oxopentanoate + H2O. It participates in amino-acid biosynthesis; L-isoleucine biosynthesis; L-isoleucine from 2-oxobutanoate: step 3/4. Its pathway is amino-acid biosynthesis; L-valine biosynthesis; L-valine from pyruvate: step 3/4. Functionally, functions in the biosynthesis of branched-chain amino acids. Catalyzes the dehydration of (2R,3R)-2,3-dihydroxy-3-methylpentanoate (2,3-dihydroxy-3-methylvalerate) into 2-oxo-3-methylpentanoate (2-oxo-3-methylvalerate) and of (2R)-2,3-dihydroxy-3-methylbutanoate (2,3-dihydroxyisovalerate) into 2-oxo-3-methylbutanoate (2-oxoisovalerate), the penultimate precursor to L-isoleucine and L-valine, respectively. This is Dihydroxy-acid dehydratase from Caldicellulosiruptor saccharolyticus (strain ATCC 43494 / DSM 8903 / Tp8T 6331).